A 400-amino-acid polypeptide reads, in one-letter code: Nicotinate phosphoribosyltransferase (400 aa).

Phosphohistidine; by autocatalysis is present on histidine 220.

Belongs to the NAPRTase family. Post-translationally, transiently phosphorylated on a His residue during the reaction cycle. Phosphorylation strongly increases the affinity for substrates and increases the rate of nicotinate D-ribonucleotide production. Dephosphorylation regenerates the low-affinity form of the enzyme, leading to product release.

The enzyme catalyses nicotinate + 5-phospho-alpha-D-ribose 1-diphosphate + ATP + H2O = nicotinate beta-D-ribonucleotide + ADP + phosphate + diphosphate. The protein operates within cofactor biosynthesis; NAD(+) biosynthesis; nicotinate D-ribonucleotide from nicotinate: step 1/1. Functionally, catalyzes the synthesis of beta-nicotinate D-ribonucleotide from nicotinate and 5-phospho-D-ribose 1-phosphate at the expense of ATP. The chain is Nicotinate phosphoribosyltransferase from Escherichia coli O45:K1 (strain S88 / ExPEC).